The following is a 64-amino-acid chain: uncharacterized protein (64 aa).

Its subcellular location is the mitochondrion. This is an uncharacterized protein from Marchantia polymorpha (Common liverwort).